Consider the following 98-residue polypeptide: YcgL domain-containing protein Ping_1076 (98 aa).

One can recognise a YcgL domain in the interval 1–85 (MLCAVYKSIR…PPVNHLQEHK (85 aa)). Residues 75–98 (PPPVNHLQEHKDWKKKRQENKNEI) are disordered.

This Psychromonas ingrahamii (strain DSM 17664 / CCUG 51855 / 37) protein is YcgL domain-containing protein Ping_1076.